An 829-amino-acid polypeptide reads, in one-letter code: Isethionate sulfite-lyase (829 aa).

A PFL domain is found at glutamate 31–leucine 699. 2-hydroxyethane-1-sulfonate contacts are provided by residues arginine 188, glutamine 192, cysteine 467–glutamate 469, and arginine 677. Cysteine 467 (cysteine radical intermediate) is an active-site residue. Glutamate 469 functions as the Proton acceptor in the catalytic mechanism. The Glycine radical domain occupies aspartate 706–methionine 829. Residue glycine 804 is modified to Glycine radical.

It belongs to the glycyl radical enzyme (GRE) family. As to quaternary structure, homodimer. Requires the activating protein IslB to generate the key active site glycyl radical on Gly-804 that is involved in catalysis.

It carries out the reaction 2-hydroxyethane-1-sulfonate = acetaldehyde + sulfite + H(+). Its pathway is organosulfur degradation; alkanesulfonate degradation. In terms of biological role, involved in an anaerobic respiration pathway that converts the sulfonate isethionate (2-hydroxyethanesulfonate) to ammonia, acetate and sulfide. Catalyzes the radical-mediated C-S bond cleavage of isethionate (2-hydroxyethanesulfonate) to form sulfite and acetaldehyde. The chain is Isethionate sulfite-lyase from Oleidesulfovibrio alaskensis (strain ATCC BAA-1058 / DSM 17464 / G20) (Desulfovibrio alaskensis).